Consider the following 339-residue polypeptide: Cilia- and flagella-associated protein 36 (339 aa).

2 coiled-coil regions span residues 142–188 (ISDL…ENKQ) and 255–330 (NLSQ…EVIL). Disordered stretches follow at residues 177–212 (NLTLGEHSENKQSSGSERTPNNTELPVKTQKEEKQP) and 281–318 (KKQESKKMAQNSEEHEEKATCSKQEMTEEEKKSLQRRK). Over residues 187-200 (KQSSGSERTPNNTE) the composition is skewed to polar residues. Basic and acidic residues predominate over residues 281–313 (KKQESKKMAQNSEEHEEKATCSKQEMTEEEKKS).

It belongs to the CFAP36 family.

The protein resides in the nucleus. The protein localises to the cytoplasm. It localises to the cell projection. Its subcellular location is the cilium. It is found in the flagellum. The polypeptide is Cilia- and flagella-associated protein 36 (Xenopus tropicalis (Western clawed frog)).